The chain runs to 399 residues: Succinate--CoA ligase [ADP-forming] subunit beta (399 aa).

An ATP-grasp domain is found at 9-254 (KELLAKYGIG…ETEEDPAEVE (246 aa)). Residues Lys46, 53 to 55 (GRG), Val112, and Glu117 contribute to the ATP site. Positions 209 and 223 each coordinate Mg(2+). Substrate contacts are provided by residues Asn274 and 331 to 333 (GIM).

The protein belongs to the succinate/malate CoA ligase beta subunit family. As to quaternary structure, heterotetramer of two alpha and two beta subunits. Requires Mg(2+) as cofactor.

It carries out the reaction succinate + ATP + CoA = succinyl-CoA + ADP + phosphate. It catalyses the reaction GTP + succinate + CoA = succinyl-CoA + GDP + phosphate. It functions in the pathway carbohydrate metabolism; tricarboxylic acid cycle; succinate from succinyl-CoA (ligase route): step 1/1. Functionally, succinyl-CoA synthetase functions in the citric acid cycle (TCA), coupling the hydrolysis of succinyl-CoA to the synthesis of either ATP or GTP and thus represents the only step of substrate-level phosphorylation in the TCA. The beta subunit provides nucleotide specificity of the enzyme and binds the substrate succinate, while the binding sites for coenzyme A and phosphate are found in the alpha subunit. The polypeptide is Succinate--CoA ligase [ADP-forming] subunit beta (Erythrobacter litoralis (strain HTCC2594)).